Consider the following 351-residue polypeptide: Cytosolic sulfotransferase 9 (351 aa).

The segment covering M1–R11 has biased composition (basic and acidic residues). Residues M1–E24 are disordered. Residues E12–S22 show a composition bias toward acidic residues. K80–W85 provides a ligand contact to 3'-phosphoadenylyl sulfate. Residue H152 is the Proton acceptor of the active site. 3'-phosphoadenylyl sulfate-binding positions include R174, S182, Y252, and R317–G319.

Belongs to the sulfotransferase 1 family. In terms of tissue distribution, expressed in roots and leaves.

The protein localises to the cytoplasm. Functionally, sulfotransferase that utilizes 3'-phospho-5'-adenylyl sulfate (PAPS) as sulfonate donor. No activity with brassinosteroids. The protein is Cytosolic sulfotransferase 9 (STO9) of Arabidopsis thaliana (Mouse-ear cress).